Here is a 125-residue protein sequence, read N- to C-terminus: Large ribosomal subunit protein bL12 (125 aa).

This sequence belongs to the bacterial ribosomal protein bL12 family. Homodimer. Part of the ribosomal stalk of the 50S ribosomal subunit. Forms a multimeric L10(L12)X complex, where L10 forms an elongated spine to which 2 to 4 L12 dimers bind in a sequential fashion. Binds GTP-bound translation factors.

Forms part of the ribosomal stalk which helps the ribosome interact with GTP-bound translation factors. Is thus essential for accurate translation. This chain is Large ribosomal subunit protein bL12, found in Chelativorans sp. (strain BNC1).